The chain runs to 229 residues: Phosphoglycolate phosphatase (229 aa).

The active-site Nucleophile is the D18. Mg(2+)-binding residues include D18, D20, and D176.

Belongs to the HAD-like hydrolase superfamily. CbbY/CbbZ/Gph/YieH family. Requires Mg(2+) as cofactor.

It catalyses the reaction 2-phosphoglycolate + H2O = glycolate + phosphate. The protein operates within organic acid metabolism; glycolate biosynthesis; glycolate from 2-phosphoglycolate: step 1/1. Specifically catalyzes the dephosphorylation of 2-phosphoglycolate. Is involved in the dissimilation of the intracellular 2-phosphoglycolate formed during the DNA repair of 3'-phosphoglycolate ends, a major class of DNA lesions induced by oxidative stress. The polypeptide is Phosphoglycolate phosphatase (Xylella fastidiosa (strain 9a5c)).